A 559-amino-acid polypeptide reads, in one-letter code: Acetylcholinesterase-1 (559 aa).

Positions Met1–Gly21 are cleaved as a signal peptide. Cysteines 92 and 114 form a disulfide. Substrate is bound at residue Gly142 to Gly143. The active-site Acyl-ester intermediate is the Ser223. A Phosphoserine modification is found at Ser223. An intrachain disulfide couples Cys276 to Cys293. N-linked (GlcNAc...) asparagine glycosylation is found at Asn278 and Asn342. Glu354 serves as the catalytic Charge relay system. Asn374 carries an N-linked (GlcNAc...) asparagine glycan. An intrachain disulfide couples Cys432 to Cys550. His471 serves as the catalytic Charge relay system.

The protein belongs to the type-B carboxylesterase/lipase family. In terms of tissue distribution, expressed by the venom gland.

The protein resides in the secreted. It carries out the reaction acetylcholine + H2O = choline + acetate + H(+). In terms of biological role, terminates signal transduction at the neuromuscular junction by rapid hydrolysis of the acetylcholine released into the synaptic cleft. The protein is Acetylcholinesterase-1 of Trittame loki (Brush-footed trapdoor spider).